A 274-amino-acid polypeptide reads, in one-letter code: Diaminopimelate epimerase (274 aa).

Substrate is bound by residues N11, Q44, and N64. C73 (proton donor) is an active-site residue. Residues 74–75 (GN), N157, N190, and 208–209 (ER) each bind substrate. The active-site Proton acceptor is C217. Substrate is bound at residue 218–219 (GS).

It belongs to the diaminopimelate epimerase family. In terms of assembly, homodimer.

The protein resides in the cytoplasm. It carries out the reaction (2S,6S)-2,6-diaminopimelate = meso-2,6-diaminopimelate. It functions in the pathway amino-acid biosynthesis; L-lysine biosynthesis via DAP pathway; DL-2,6-diaminopimelate from LL-2,6-diaminopimelate: step 1/1. Functionally, catalyzes the stereoinversion of LL-2,6-diaminopimelate (L,L-DAP) to meso-diaminopimelate (meso-DAP), a precursor of L-lysine and an essential component of the bacterial peptidoglycan. This is Diaminopimelate epimerase from Serratia proteamaculans (strain 568).